Here is a 184-residue protein sequence, read N- to C-terminus: UPF0397 protein SA2477 (184 aa).

5 consecutive transmembrane segments (helical) span residues 11–31 (VVAIGIGAAVFVILGRFVVIP), 44–64 (AFLALISAIFGPFAGLMTGLV), 77–97 (AWWSWVICSGIIGCLYGWIGL), 111–131 (MIYFNIGQIIANIICWALIAP), and 148–168 (QGVISAVLNIISVGIIGTILL).

The protein belongs to the UPF0397 family.

The protein localises to the cell membrane. In Staphylococcus aureus (strain N315), this protein is UPF0397 protein SA2477.